The primary structure comprises 331 residues: Mycothiol acetyltransferase (331 aa).

E33 lines the 1D-myo-inositol 2-(L-cysteinylamino)-2-deoxy-alpha-D-glucopyranoside pocket. Residues 59 to 86 (HAAEATAGSAASADPADPADPAAPADPA) are compositionally biased toward low complexity. The tract at residues 59-89 (HAAEATAGSAASADPADPADPAAPADPADPA) is disordered. 115–120 (RRGHGS) is a binding site for acetyl-CoA. In terms of domain architecture, N-acetyltransferase spans 183 to 331 (LRLDTFEESR…DVQLRATERG (149 aa)). Positions 210, 249, and 261 each coordinate 1D-myo-inositol 2-(L-cysteinylamino)-2-deoxy-alpha-D-glucopyranoside. Residue 265 to 267 (VAT) coordinates acetyl-CoA. Y299 contributes to the 1D-myo-inositol 2-(L-cysteinylamino)-2-deoxy-alpha-D-glucopyranoside binding site. 304–309 (NAPALR) is an acetyl-CoA binding site.

Belongs to the acetyltransferase family. MshD subfamily. In terms of assembly, monomer.

It catalyses the reaction 1D-myo-inositol 2-(L-cysteinylamino)-2-deoxy-alpha-D-glucopyranoside + acetyl-CoA = mycothiol + CoA + H(+). Its function is as follows. Catalyzes the transfer of acetyl from acetyl-CoA to desacetylmycothiol (Cys-GlcN-Ins) to form mycothiol. The protein is Mycothiol acetyltransferase of Brachybacterium faecium (strain ATCC 43885 / DSM 4810 / JCM 11609 / LMG 19847 / NBRC 14762 / NCIMB 9860 / 6-10).